Here is a 37-residue protein sequence, read N- to C-terminus: Cytochrome b6-f complex subunit 5 (37 aa).

A helical transmembrane segment spans residues 5–25 (LLFGIVLGLIPVTLTGLFVAA).

Belongs to the PetG family. In terms of assembly, the 4 large subunits of the cytochrome b6-f complex are cytochrome b6, subunit IV (17 kDa polypeptide, PetD), cytochrome f and the Rieske protein, while the 4 small subunits are PetG, PetL, PetM and PetN. The complex functions as a dimer.

It is found in the plastid. Its subcellular location is the chloroplast thylakoid membrane. In terms of biological role, component of the cytochrome b6-f complex, which mediates electron transfer between photosystem II (PSII) and photosystem I (PSI), cyclic electron flow around PSI, and state transitions. PetG is required for either the stability or assembly of the cytochrome b6-f complex. This Guillardia theta (Cryptophyte) protein is Cytochrome b6-f complex subunit 5.